The sequence spans 694 residues: Lon-like protease BrxL (694 aa).

The protein belongs to the BrxL family.

In terms of biological role, BREX systems (bacteriophage exclusion) provide immunity against bacteriophage. Part of a type 1 BREX system which protects against dsDNA phage. This system allows phage adsorption but prevents phage DNA replication, without degradation of the phage DNA. Methylation of bacterial DNA by PglX guides self/non-self discrimination. When the brxA-brxB-brxC-pglX-pglZ-brxL genes are transformed into a susceptible E.coli strain (BW25113) they confer very high resistance to infection by bacteriophage VR7 and VpaE1, about 100-fold protection against lambda, T5 and T7 and no protection against RNA phage Qbeta, ssDNA phage M13 or dSDNA phage T4 and VR5. Glycosylated phage DNA is not susceptible to BREX. The BREX system does not confer resistance to lysogenic lambda phage, i.e. prophage that are integrated into the chromosomal DNA and then induced to form phage. Expression of this protein alone is toxic. In Escherichia coli O9:H4 (strain HS), this protein is Lon-like protease BrxL.